The chain runs to 174 residues: ATP-dependent protease subunit HslV (174 aa).

Thr-4 is an active-site residue. Residues Ala-159, Cys-162, and Thr-165 each coordinate Na(+).

The protein belongs to the peptidase T1B family. HslV subfamily. In terms of assembly, a double ring-shaped homohexamer of HslV is capped on each side by a ring-shaped HslU homohexamer. The assembly of the HslU/HslV complex is dependent on binding of ATP.

The protein localises to the cytoplasm. The enzyme catalyses ATP-dependent cleavage of peptide bonds with broad specificity.. Allosterically activated by HslU binding. Protease subunit of a proteasome-like degradation complex believed to be a general protein degrading machinery. In Moorella thermoacetica (strain ATCC 39073 / JCM 9320), this protein is ATP-dependent protease subunit HslV.